Reading from the N-terminus, the 110-residue chain is UPF0060 membrane protein Bamb_1160 (110 aa).

Helical transmembrane passes span 9–29 (ALFA…WLVL), 34–54 (PVWL…LLTL), 66–86 (YGGV…GVAL), and 88–108 (RWDA…ALQP).

It belongs to the UPF0060 family.

Its subcellular location is the cell inner membrane. This is UPF0060 membrane protein Bamb_1160 from Burkholderia ambifaria (strain ATCC BAA-244 / DSM 16087 / CCUG 44356 / LMG 19182 / AMMD) (Burkholderia cepacia (strain AMMD)).